The primary structure comprises 468 residues: Uronate isomerase (468 aa).

This sequence belongs to the metallo-dependent hydrolases superfamily. Uronate isomerase family.

It catalyses the reaction D-glucuronate = D-fructuronate. The enzyme catalyses aldehydo-D-galacturonate = keto-D-tagaturonate. It functions in the pathway carbohydrate metabolism; pentose and glucuronate interconversion. The polypeptide is Uronate isomerase (Phocaeicola vulgatus (strain ATCC 8482 / DSM 1447 / JCM 5826 / CCUG 4940 / NBRC 14291 / NCTC 11154) (Bacteroides vulgatus)).